The primary structure comprises 244 residues: Methanethiol S-methyltransferase (244 aa).

5 helical membrane passes run 7–27 (IIYG…AIGF), 41–61 (IAAP…VFAV), 90–110 (LLAS…PAVI), 120–140 (VALW…TFMI), and 181–201 (GFVV…LFAI).

The protein belongs to the nurim family.

The protein resides in the membrane. The enzyme catalyses methanethiol + S-adenosyl-L-methionine = dimethyl sulfide + S-adenosyl-L-homocysteine + H(+). Its function is as follows. Catalyzes the methylation of methanethiol (MeSH) to yield dimethylsulphide (DMS). In Mycobacterium tuberculosis (strain ATCC 25618 / H37Rv), this protein is Methanethiol S-methyltransferase.